A 732-amino-acid chain; its full sequence is Cyclopenase asqI (732 aa).

Zn(2+) is bound by residues H168, H172, and H200.

This sequence belongs to the tyrosinase family. It depends on Zn(2+) as a cofactor.

It carries out the reaction (-)-cyclopenine = viridicatin + methyl isocyanate + H(+). It catalyses the reaction (-)-4'-methoxycyclopenine = 4'-methoxyviridicatin + methyl isocyanate + H(+). It participates in secondary metabolite biosynthesis. It functions in the pathway alkaloid biosynthesis. The protein operates within mycotoxin biosynthesis. In terms of biological role, cyclopenase; part of the gene cluster that mediates the biosynthesis of the aspoquinolone mycotoxins. Within the pathway, the cyclopenase asqI catalyzes the conversion of 4'-methoxycyclopenin into 4'-methoxyviridicatin. Cyclopenin can also be converted into viridicatin by asqI. The first step of the pathway is catalyzed by the nonribosomal peptide synthetase asqK that condenses anthranilic acid and O-methyl-L-tyrosine to produce 4'-methoxycyclopeptin. 4'-methoxycyclopeptin is then converted to 4'-methoxydehydrocyclopeptin by the ketoglutarate-dependent dioxygenase asqJ. AsqJ also converts its first product 4'-methoxydehydrocyclopeptin to 4'-methoxycyclopenin. The following conversion of 4'-methoxycyclopenin into 4'-methoxyviridicatin is catalyzed by the cyclopenase asqI. 4'-methoxyviridicatin is the precursor of quinolone natural products, and is further converted to quinolinone B. The prenyltransferase asqH1 then catalyzes the canonical Friedel-Crafts alkylation of quinolinone B with dimethylallyl cation to yield dimethylallyl quinolone, which is subjected to FAD-dependent dehydrogenation by the FAD-linked oxidoreductase asqF to yield conjugated aryl diene. The delta(3') double bond then serves as the site of the second alkylation with DMAPP catalyzed by the prenyltransferase asqH2 to yield a carbenium ion intermediate, which can be attacked by H(2)O to yield a styrenyl quinolone containing a C3'-hydroxyprenyl chain. The FAD-dependent monooxygenase asqG performs epoxidation of the terminal C7'-C8' olefin. Finally, after dehydratation of the epoxide at C3 by asqC, the quinolone epoxide rearrangement protein asqO catalyzes an enzymatic 3-exo-tet cyclization to yield the cyclopropyl-THF ring system in aspoquinolone. In Emericella nidulans (strain FGSC A4 / ATCC 38163 / CBS 112.46 / NRRL 194 / M139) (Aspergillus nidulans), this protein is Cyclopenase asqI.